Reading from the N-terminus, the 581-residue chain is MESLSLSLLLLVSWLQGSQCAAAKELSCQEITVPLCKDIGYNYTYMPNQFNHDTQDEAGMEVHQFWPLVVIHCSPDLKFFLCSMYTPICLEDYKKPLPPCRSVCERARAGCAPLMRQYGFAWPDRMRCDRLPEQGNPDTLCMDYYNRTEQTTAAPSHPEPPKPPARSVPKGRTRVEPPRSRSRATGCESGCQCRAPMVQVSNERHPLYNRVRTGQIPNCAMPCHNPFFSPEERTFTEFWIGLWSVLCFASTFATVSTFLIDMERFKYPERPIIFLSACYLLVSTGYLIRLIAGHEKVACSRGELDLEHIIHYETTGPALCTLVFLLIYFFGMASSIWWVILSLTWFLAAGMKWGNEAIAGYSQYFHLAAWLVPSIKSIAVLALSSVDGDPVAGICFVGNQNLDNLRGFVLAPLVIYLFIGSMFLLAGFVSLFRIRSVIKQGGTKTDKLEKLMIRIGIFSVLYTVPATIVVACFFYEQHNRQGWEVAHNCNSCQPEMAQPHRPDYAVFMLKYFMCLVVGITSGVWIWSGKTLESWRAFCTRCCWGSKATGGSMYSDVSTGLTWRSGTGSSVSCPKQMPLSQV.

The N-terminal stretch at methionine 1–alanine 23 is a signal peptide. An FZ domain is found at lysine 24–tyrosine 144. Residues lysine 24–tryptophan 239 are Extracellular-facing. Intrachain disulfides connect cysteine 28-cysteine 89, cysteine 36-cysteine 82, cysteine 73-cysteine 111, cysteine 100-cysteine 141, and cysteine 104-cysteine 128. Asparagine 42 carries an N-linked (GlcNAc...) asparagine glycan. Glutamine 64 to isoleucine 71 contributes to the hexadecanoate binding site. The segment at isoleucine 88–tyrosine 93 is wnt-binding. The interval leucine 140 to asparagine 146 is wnt-binding. Asparagine 146 carries an N-linked (GlcNAc...) asparagine glycan. Residues threonine 151–serine 189 are disordered. Pro residues predominate over residues histidine 157 to arginine 166. A helical transmembrane segment spans residues isoleucine 240 to isoleucine 260. The Cytoplasmic segment spans residues aspartate 261–proline 271. Residues isoleucine 272–alanine 292 traverse the membrane as a helical segment. The Extracellular segment spans residues glycine 293–cysteine 320. A helical membrane pass occupies residues threonine 321–leucine 341. The Cytoplasmic portion of the chain corresponds to serine 342–serine 377. Residues isoleucine 378–glycine 398 traverse the membrane as a helical segment. Topologically, residues asparagine 399–glycine 407 are extracellular. A helical transmembrane segment spans residues phenylalanine 408–phenylalanine 428. Over valine 429–arginine 454 the chain is Cytoplasmic. The helical transmembrane segment at isoleucine 455 to tyrosine 475 threads the bilayer. At glutamate 476–alanine 505 the chain is on the extracellular side. The helical transmembrane segment at valine 506–tryptophan 526 threads the bilayer. Over serine 527–valine 581 the chain is Cytoplasmic. Positions lysine 529–tryptophan 534 match the Lys-Thr-X-X-X-Trp motif, mediates interaction with the PDZ domain of Dvl family members motif. Positions serine 579–valine 581 match the PDZ-binding motif.

This sequence belongs to the G-protein coupled receptor Fz/Smo family. In terms of assembly, interacts with lypd6 and the interaction is strongly enhanced by wnt3a.

The protein localises to the membrane. The protein resides in the cell membrane. In terms of biological role, receptor for Wnt proteins. Most of frizzled receptors are coupled to the beta-catenin canonical signaling pathway, which leads to the activation of disheveled proteins, inhibition of GSK-3 kinase, nuclear accumulation of beta-catenin and activation of Wnt target genes. A second signaling pathway involving PKC and calcium fluxes has been seen for some family members, but it is not yet clear if it represents a distinct pathway or if it can be integrated in the canonical pathway, as PKC seems to be required for Wnt-mediated inactivation of GSK-3 kinase. Both pathways seem to involve interactions with G-proteins. May be involved in transduction and intercellular transmission of polarity information during tissue morphogenesis and/or in differentiated tissues. Activation by Wnt8, Wnt5A or Wnt3A induces expression of beta-catenin target genes. Displays an axis-inducing activity. This Xenopus laevis (African clawed frog) protein is Frizzled-8 (fzd8).